Consider the following 302-residue polypeptide: Methylsterol monooxygenase erg25A (302 aa).

An N-linked (GlcNAc...) asparagine glycan is attached at Asn5. 3 helical membrane-spanning segments follow: residues 47-67, 105-125, and 132-152; these read NIVA…IYFS, YILL…HPMM, and FTIP…FFLL. The 137-residue stretch at 147–283 folds into the Fatty acid hydroxylase domain; sequence IIFFLLEDTY…FRHWDVLMGT (137 aa). The Histidine box-1 signature appears at 161 to 165; that stretch reads HRAMH. The short motif at 174–178 is the Histidine box-2 element; that stretch reads HRIHH. Residues 193–213 form a helical membrane-spanning segment; the sequence is PWETLLLGLGTIGPPLLLALM. Residues 258–264 carry the Histidine box-3 motif; it reads WHDDHHR. N-linked (GlcNAc...) asparagine glycosylation occurs at Asn269.

It belongs to the sterol desaturase family. The cofactor is Fe cation.

It localises to the endoplasmic reticulum membrane. It participates in steroid metabolism; ergosterol biosynthesis. Functionally, sterol-C4-methyl oxidase; part of the third module of ergosterol biosynthesis pathway that includes the late steps of the pathway. Erg25A is a catalytic component of the C-4 demethylation complex that catalyzes the conversion of 4,4-dimethylfecosterol into fecosterol via 4-methylfecosterol. The third module or late pathway involves the ergosterol synthesis itself through consecutive reactions that mainly occur in the endoplasmic reticulum (ER) membrane. Firstly, the squalene synthase erg9 catalyzes the condensation of 2 farnesyl pyrophosphate moieties to form squalene, which is the precursor of all steroids. Squalene synthase is crucial for balancing the incorporation of farnesyl diphosphate (FPP) into sterol and nonsterol isoprene synthesis. Secondly, squalene is converted into lanosterol by the consecutive action of the squalene epoxidase erg1 and the lanosterol synthase erg7. Then, the delta(24)-sterol C-methyltransferase erg6 methylates lanosterol at C-24 to produce eburicol. Eburicol is the substrate of the sterol 14-alpha demethylase encoded by cyp51A and cyp51B, to yield 4,4,24-trimethyl ergosta-8,14,24(28)-trienol. The C-14 reductase erg24 then reduces the C14=C15 double bond which leads to 4,4-dimethylfecosterol. A sequence of further demethylations at C-4, involving the C-4 demethylation complex containing the C-4 methylsterol oxidases erg25A or erg25B, the sterol-4-alpha-carboxylate 3-dehydrogenase erg26 and the 3-keto-steroid reductase erg27, leads to the production of fecosterol via 4-methylfecosterol. The C-8 sterol isomerase erg2 then catalyzes the reaction which results in unsaturation at C-7 in the B ring of sterols and thus converts fecosterol to episterol. The sterol-C5-desaturase erg3B then catalyzes the introduction of a C-5 double bond in the B ring to produce 5-dehydroepisterol. The 2 other sterol-C5-desaturases, erg3A and erg3C, seem to be less important in ergosterol biosynthesis. The C-22 sterol desaturase erg5 further converts 5-dehydroepisterol into ergosta-5,7,22,24(28)-tetraen-3beta-ol by forming the C-22(23) double bond in the sterol side chain. Finally, ergosta-5,7,22,24(28)-tetraen-3beta-ol is substrate of the C-24(28) sterol reductases erg4A and erg4B to produce ergosterol. Possible alternative sterol biosynthetic pathways might exist from fecosterol to ergosterol, depending on the activities of the erg3 isoforms. This is Methylsterol monooxygenase erg25A from Aspergillus fumigatus (strain ATCC MYA-4609 / CBS 101355 / FGSC A1100 / Af293) (Neosartorya fumigata).